The following is a 70-amino-acid chain: Protein FlmC (70 aa).

Component of a type I toxin-antitoxin (TA) system. Either this protein or sequences upstream of it are required for translation of downstream flmA; this could be translationally coupled to flmA. The sequence is that of Protein FlmC (flmC) from Escherichia coli (strain K12).